The chain runs to 183 residues: uncharacterized protein (183 aa).

Residues 153–175 (LLYVFIRLFAGCLKVFRLCILWL) form a helical membrane-spanning segment.

The protein localises to the membrane. This is an uncharacterized protein from Saccharomyces cerevisiae (strain ATCC 204508 / S288c) (Baker's yeast).